Consider the following 458-residue polypeptide: UDP-N-acetylglucosamine 1-carboxyvinyltransferase (458 aa).

Residue 34-35 (KN) participates in phosphoenolpyruvate binding. Residue Arg-104 participates in UDP-N-acetyl-alpha-D-glucosamine binding. Cys-128 serves as the catalytic Proton donor. Cys-128 is subject to 2-(S-cysteinyl)pyruvic acid O-phosphothioketal. Positions 320 and 342 each coordinate UDP-N-acetyl-alpha-D-glucosamine.

It belongs to the EPSP synthase family. MurA subfamily.

The protein localises to the cytoplasm. It catalyses the reaction phosphoenolpyruvate + UDP-N-acetyl-alpha-D-glucosamine = UDP-N-acetyl-3-O-(1-carboxyvinyl)-alpha-D-glucosamine + phosphate. The protein operates within cell wall biogenesis; peptidoglycan biosynthesis. Functionally, cell wall formation. Adds enolpyruvyl to UDP-N-acetylglucosamine. The chain is UDP-N-acetylglucosamine 1-carboxyvinyltransferase from Prochlorococcus marinus (strain NATL1A).